Reading from the N-terminus, the 55-residue chain is Large ribosomal subunit protein bL33 (55 aa).

Belongs to the bacterial ribosomal protein bL33 family.

In Beijerinckia indica subsp. indica (strain ATCC 9039 / DSM 1715 / NCIMB 8712), this protein is Large ribosomal subunit protein bL33.